The following is an 89-amino-acid chain: Cell division topological specificity factor (89 aa).

This sequence belongs to the MinE family.

Prevents the cell division inhibition by proteins MinC and MinD at internal division sites while permitting inhibition at polar sites. This ensures cell division at the proper site by restricting the formation of a division septum at the midpoint of the long axis of the cell. The protein is Cell division topological specificity factor of Legionella pneumophila (strain Paris).